A 200-amino-acid chain; its full sequence is Small ribosomal subunit protein uS4 (200 aa).

Residues 94 to 157 (SRLDNLVFRA…QTSPQVKDAV (64 aa)) enclose the S4 RNA-binding domain.

It belongs to the universal ribosomal protein uS4 family. Part of the 30S ribosomal subunit. Contacts protein S5. The interaction surface between S4 and S5 is involved in control of translational fidelity.

Its function is as follows. One of the primary rRNA binding proteins, it binds directly to 16S rRNA where it nucleates assembly of the body of the 30S subunit. With S5 and S12 plays an important role in translational accuracy. This Metamycoplasma arthritidis (strain 158L3-1) (Mycoplasma arthritidis) protein is Small ribosomal subunit protein uS4.